The primary structure comprises 529 residues: Bifunctional purine biosynthesis protein PurH (529 aa).

The MGS-like domain occupies 2–148; that stretch reads QHLRPIRRAL…KNHKDVTIVV (147 aa).

The protein belongs to the PurH family.

The enzyme catalyses (6R)-10-formyltetrahydrofolate + 5-amino-1-(5-phospho-beta-D-ribosyl)imidazole-4-carboxamide = 5-formamido-1-(5-phospho-D-ribosyl)imidazole-4-carboxamide + (6S)-5,6,7,8-tetrahydrofolate. The catalysed reaction is IMP + H2O = 5-formamido-1-(5-phospho-D-ribosyl)imidazole-4-carboxamide. It participates in purine metabolism; IMP biosynthesis via de novo pathway; 5-formamido-1-(5-phospho-D-ribosyl)imidazole-4-carboxamide from 5-amino-1-(5-phospho-D-ribosyl)imidazole-4-carboxamide (10-formyl THF route): step 1/1. The protein operates within purine metabolism; IMP biosynthesis via de novo pathway; IMP from 5-formamido-1-(5-phospho-D-ribosyl)imidazole-4-carboxamide: step 1/1. The sequence is that of Bifunctional purine biosynthesis protein PurH from Proteus mirabilis (strain HI4320).